The primary structure comprises 156 residues: Urease accessory protein UreE (156 aa).

A disordered region spans residues R133 to A156. A compositionally biased stretch (basic and acidic residues) spans M145–A156.

It belongs to the UreE family.

Its subcellular location is the cytoplasm. Its function is as follows. Involved in urease metallocenter assembly. Binds nickel. Probably functions as a nickel donor during metallocenter assembly. This is Urease accessory protein UreE from Rhodobacter capsulatus (Rhodopseudomonas capsulata).